A 374-amino-acid chain; its full sequence is Probable Histone-lysine N-methyltransferase ATXR5 (374 aa).

The N-terminal 46 residues, 1–46, are a transit peptide targeting the chloroplast; it reads MAPASITTTTTVARRIVGSRRRTKATSPPDSPPPKKLKPISEILAK. Residues 16 to 38 are disordered; sequence IVGSRRRTKATSPPDSPPPKKLK. The PHD-type zinc-finger motif lies at 59–109; the sequence is DVSCMQCGSGERAEELLLCDKCDKGFHMKCVRPIVVRVPIGSWLCPKCSGQ. Met-216 contributes to the substrate binding site. Residues 240–362 enclose the SET domain; sequence PPLLVVFDSR…KGERLYYDYN (123 aa). S-adenosyl-L-methionine-binding positions include 250-252 and 312-316; these read EGF and RFISG. Substrate contacts are provided by residues Arg-334 and 364–365; that span reads YE. Positions 368 and 374 each coordinate S-adenosyl-L-methionine.

Belongs to the class V-like SAM-binding methyltransferase superfamily. In terms of assembly, homodimer.

It localises to the plastid. Its subcellular location is the chloroplast. The protein localises to the nucleus. The catalysed reaction is L-lysyl(27)-[histone H3] + S-adenosyl-L-methionine = N(6)-methyl-L-lysyl(27)-[histone H3] + S-adenosyl-L-homocysteine + H(+). Functionally, histone methyltransferase that specifically monomethylates 'Lys-27' of histone H3 (H3K27me1). Has much higher activity on nucleosomes containing H3.1 than H3.3. Involved in the formation of constitutive heterochromatin and the silencing of heterochromatic elements. This is Probable Histone-lysine N-methyltransferase ATXR5 (ATXR5) from Ricinus communis (Castor bean).